We begin with the raw amino-acid sequence, 458 residues long: Phosphoglucosamine mutase (458 aa).

S106 serves as the catalytic Phosphoserine intermediate. Residues S106, D247, D249, and D251 each contribute to the Mg(2+) site. S106 bears the Phosphoserine mark.

The protein belongs to the phosphohexose mutase family. Requires Mg(2+) as cofactor. Post-translationally, activated by phosphorylation.

It catalyses the reaction alpha-D-glucosamine 1-phosphate = D-glucosamine 6-phosphate. In terms of biological role, catalyzes the conversion of glucosamine-6-phosphate to glucosamine-1-phosphate. This chain is Phosphoglucosamine mutase, found in Chlamydia felis (strain Fe/C-56) (Chlamydophila felis).